The chain runs to 103 residues: Large ribosomal subunit protein eL14 (103 aa).

Belongs to the eukaryotic ribosomal protein eL14 family.

The polypeptide is Large ribosomal subunit protein eL14 (Pyrobaculum arsenaticum (strain DSM 13514 / JCM 11321 / PZ6)).